The chain runs to 497 residues: NAD(P)H-quinone oxidoreductase chain 4, chloroplastic (497 aa).

Transmembrane regions (helical) follow at residues 5–25 (VPWLTVIVSLPIFAGLMIPIL), 36–56 (YTLGICILEFLLITYIFYCHF), 88–108 (LGLVILTGFATTLATLSAWPI), 112–132 (TRLFYFLMLIMYGGQIGLFVS), 135–155 (ILLFFFMWEIELIPVYLLLCL), 168–188 (FVLYTAGGSIFLLVAALTMSF), 212–232 (VLIYVGFLVAYAVKLPIFPFH), 243–263 (HYSTCMLLAGVLLKMGGYGLI), 275–295 (FLLGSWMMLFGAIQIIYASLI), 306–326 (IAYSSISHMGFVTIGIGSFTE), 331–351 (GAILQMISHGLIGAALFFLAG), 387–407 (LALPGMSGFVSELLVFLGVVT), 418–438 (GITVLEGIGTVLTPIYLLSML), and 463–483 (LFILICFLLPILGIGLYPNLI).

Belongs to the complex I subunit 4 family.

The protein resides in the plastid. It is found in the chloroplast thylakoid membrane. The enzyme catalyses a plastoquinone + NADH + (n+1) H(+)(in) = a plastoquinol + NAD(+) + n H(+)(out). It catalyses the reaction a plastoquinone + NADPH + (n+1) H(+)(in) = a plastoquinol + NADP(+) + n H(+)(out). The polypeptide is NAD(P)H-quinone oxidoreductase chain 4, chloroplastic (Adiantum capillus-veneris (Maidenhair fern)).